Consider the following 428-residue polypeptide: Kynureninase (428 aa).

Residues Thr-104, Thr-105, 132–135, Asp-213, His-216, and Tyr-238 contribute to the pyridoxal 5'-phosphate site; that span reads FPSD. Lys-239 is subject to N6-(pyridoxal phosphate)lysine. Pyridoxal 5'-phosphate-binding residues include Trp-267 and Thr-295.

Belongs to the kynureninase family. Homodimer. Pyridoxal 5'-phosphate serves as cofactor.

It catalyses the reaction L-kynurenine + H2O = anthranilate + L-alanine + H(+). The enzyme catalyses 3-hydroxy-L-kynurenine + H2O = 3-hydroxyanthranilate + L-alanine + H(+). Its pathway is amino-acid degradation; L-kynurenine degradation; L-alanine and anthranilate from L-kynurenine: step 1/1. It participates in cofactor biosynthesis; NAD(+) biosynthesis; quinolinate from L-kynurenine: step 2/3. Catalyzes the cleavage of L-kynurenine (L-Kyn) and L-3-hydroxykynurenine (L-3OHKyn) into anthranilic acid (AA) and 3-hydroxyanthranilic acid (3-OHAA), respectively. The protein is Kynureninase of Bacillus anthracis.